The sequence spans 442 residues: F-box protein KIB2 (442 aa).

Residues 62-109 enclose the F-box domain; sequence SKQPVLVLDLLRSILERLSFVDFHRGRCISLEWYSASESCLAVKNPTS. The short motif at 236–243 is the Nuclear localization signal element; it reads HKKGDENY.

Interacts with ASK7/BIN2/SK21.

The protein resides in the cytoplasm. It localises to the nucleus. The protein localises to the nucleolus. Functionally, component of SCF(ASK-cullin-F-box) E3 ubiquitin ligase complexes, which may mediate the ubiquitination and subsequent proteasomal degradation of target proteins. Required for brassinosteroid (BR) signal transduction. Mediates ASK7/BIN2/SK21 inactivation both by competing with substrate binding (e.g. BZR1) and by promoting its ubiquitination and subsequent proteasomal degradation. The polypeptide is F-box protein KIB2 (Arabidopsis thaliana (Mouse-ear cress)).